The sequence spans 159 residues: Trafficking protein particle complex subunit 6A (159 aa).

A Phosphoserine modification is found at serine 33.

This sequence belongs to the TRAPP small subunits family. BET3 subfamily. In terms of assembly, part of the multisubunit transport protein particle (TRAPP) complex. Heterodimer with TRAPPC3. The heterodimer TRAPPC3-TRAPPC6A interacts with TRAPPC2L. Interacts with TRAPPC2L.

Its subcellular location is the golgi apparatus. The protein resides in the cis-Golgi network. It localises to the endoplasmic reticulum. In terms of biological role, may play a role in vesicular transport during the biogenesis of melanosomes. The chain is Trafficking protein particle complex subunit 6A from Homo sapiens (Human).